The sequence spans 397 residues: Elongation factor Tu (397 aa).

The tr-type G domain occupies 10-207; the sequence is KPHCNIGTIG…EVDKYIPQPE (198 aa). The interval 19–26 is G1; that stretch reads GHVDHGKT. Residue 19–26 participates in GTP binding; the sequence is GHVDHGKT. T26 provides a ligand contact to Mg(2+). Residues 61–65 are G2; sequence GITIS. The interval 82 to 85 is G3; the sequence is DCPG. GTP-binding positions include 82–86 and 137–140; these read DCPGH and NKCD. Residues 137-140 are G4; sequence NKCD. The interval 175-177 is G5; sequence SAL.

The protein belongs to the TRAFAC class translation factor GTPase superfamily. Classic translation factor GTPase family. EF-Tu/EF-1A subfamily. In terms of assembly, monomer.

It localises to the cytoplasm. It catalyses the reaction GTP + H2O = GDP + phosphate + H(+). Its function is as follows. GTP hydrolase that promotes the GTP-dependent binding of aminoacyl-tRNA to the A-site of ribosomes during protein biosynthesis. This chain is Elongation factor Tu, found in Azorhizobium caulinodans (strain ATCC 43989 / DSM 5975 / JCM 20966 / LMG 6465 / NBRC 14845 / NCIMB 13405 / ORS 571).